We begin with the raw amino-acid sequence, 323 residues long: Viral cathepsin (323 aa).

The first 16 residues, 1–16, serve as a signal peptide directing secretion; sequence MNKILFYLFVYGVVNS. A propeptide spans 17 to 112 (activation peptide); it reads AAYDLLKAPN…IVLDQPPGKG (96 aa). Intrachain disulfides connect C133–C174, C167–C207, and C262–C310. C136 is a catalytic residue. N158 carries N-linked (GlcNAc...) asparagine; by host glycosylation. Active-site residues include H269 and N289.

Belongs to the peptidase C1 family. Post-translationally, synthesized as an inactive proenzyme and activated by proteolytic removal of the inhibitory propeptide.

The enzyme catalyses Endopeptidase of broad specificity, hydrolyzing substrates of both cathepsin L and cathepsin B.. Functionally, cysteine protease that plays an essential role in host liquefaction to facilitate horizontal transmission of the virus. May participate in the degradation of foreign protein expressed by the baculovirus system. In Helicoverpa zea (Corn earworm moth), this protein is Viral cathepsin (VCATH).